The following is a 179-amino-acid chain: MVKVANKYAKALFDVSLDTNNLETINEELTVINEAVKDKIEQLRMVDSNPTQTAEQRRELINGVFTDINPYIKNMMYVLADNRHISLIADVFKAFQSLYNGHYNQDFATIESTYELSQEELDKIVKLVTQQTKLSKVIVDTKINPDLIGGFRVKVGTTVLDGSVRNDLVQLQRKFRRVN.

It belongs to the ATPase delta chain family. As to quaternary structure, F-type ATPases have 2 components, F(1) - the catalytic core - and F(0) - the membrane proton channel. F(1) has five subunits: alpha(3), beta(3), gamma(1), delta(1), epsilon(1). F(0) has three main subunits: a(1), b(2) and c(10-14). The alpha and beta chains form an alternating ring which encloses part of the gamma chain. F(1) is attached to F(0) by a central stalk formed by the gamma and epsilon chains, while a peripheral stalk is formed by the delta and b chains.

It is found in the cell membrane. F(1)F(0) ATP synthase produces ATP from ADP in the presence of a proton or sodium gradient. F-type ATPases consist of two structural domains, F(1) containing the extramembraneous catalytic core and F(0) containing the membrane proton channel, linked together by a central stalk and a peripheral stalk. During catalysis, ATP synthesis in the catalytic domain of F(1) is coupled via a rotary mechanism of the central stalk subunits to proton translocation. Its function is as follows. This protein is part of the stalk that links CF(0) to CF(1). It either transmits conformational changes from CF(0) to CF(1) or is implicated in proton conduction. This chain is ATP synthase subunit delta, found in Staphylococcus aureus (strain USA300 / TCH1516).